The following is a 423-amino-acid chain: 3-phosphoshikimate 1-carboxyvinyltransferase (423 aa).

3 residues coordinate 3-phosphoshikimate: lysine 20, serine 21, and arginine 25. Lysine 20 is a phosphoenolpyruvate binding site. Residues glycine 91 and arginine 119 each coordinate phosphoenolpyruvate. 3-phosphoshikimate is bound by residues threonine 163, serine 164, glutamine 165, aspartate 305, glutamine 328, and lysine 332. Glutamine 165 contributes to the phosphoenolpyruvate binding site. The Proton acceptor role is filled by aspartate 305. Phosphoenolpyruvate contacts are provided by arginine 336 and arginine 377.

The protein belongs to the EPSP synthase family. In terms of assembly, monomer.

The protein resides in the cytoplasm. The enzyme catalyses 3-phosphoshikimate + phosphoenolpyruvate = 5-O-(1-carboxyvinyl)-3-phosphoshikimate + phosphate. It participates in metabolic intermediate biosynthesis; chorismate biosynthesis; chorismate from D-erythrose 4-phosphate and phosphoenolpyruvate: step 6/7. Functionally, catalyzes the transfer of the enolpyruvyl moiety of phosphoenolpyruvate (PEP) to the 5-hydroxyl of shikimate-3-phosphate (S3P) to produce enolpyruvyl shikimate-3-phosphate and inorganic phosphate. This chain is 3-phosphoshikimate 1-carboxyvinyltransferase, found in Acetivibrio thermocellus (strain ATCC 27405 / DSM 1237 / JCM 9322 / NBRC 103400 / NCIMB 10682 / NRRL B-4536 / VPI 7372) (Clostridium thermocellum).